A 315-amino-acid chain; its full sequence is Ribosomal RNA small subunit methyltransferase H (315 aa).

S-adenosyl-L-methionine-binding positions include 37–39 (GGH), Asp-57, Phe-83, Asp-105, and Gln-112.

Belongs to the methyltransferase superfamily. RsmH family.

Its subcellular location is the cytoplasm. It catalyses the reaction cytidine(1402) in 16S rRNA + S-adenosyl-L-methionine = N(4)-methylcytidine(1402) in 16S rRNA + S-adenosyl-L-homocysteine + H(+). In terms of biological role, specifically methylates the N4 position of cytidine in position 1402 (C1402) of 16S rRNA. The chain is Ribosomal RNA small subunit methyltransferase H from Pseudomonas entomophila (strain L48).